Reading from the N-terminus, the 570-residue chain is Methionine--tRNA ligase (570 aa).

The 'HIGH' region signature appears at 11–21 (PYVQTVPHLGN). Positions 143, 146, 156, and 159 each coordinate Zn(2+). The short motif at 333-337 (KFSKS) is the 'KMSKS' region element. Position 336 (Lys-336) interacts with ATP.

The protein belongs to the class-I aminoacyl-tRNA synthetase family. MetG type 1 subfamily. Zn(2+) serves as cofactor.

The protein resides in the cytoplasm. It catalyses the reaction tRNA(Met) + L-methionine + ATP = L-methionyl-tRNA(Met) + AMP + diphosphate. In terms of biological role, is required not only for elongation of protein synthesis but also for the initiation of all mRNA translation through initiator tRNA(fMet) aminoacylation. The chain is Methionine--tRNA ligase from Pyrobaculum aerophilum (strain ATCC 51768 / DSM 7523 / JCM 9630 / CIP 104966 / NBRC 100827 / IM2).